The following is a 247-amino-acid chain: Ubiquinone biosynthesis O-methyltransferase (247 aa).

S-adenosyl-L-methionine is bound by residues Arg-39, Gly-70, Asp-91, and Met-134.

Belongs to the methyltransferase superfamily. UbiG/COQ3 family.

It catalyses the reaction a 3-demethylubiquinol + S-adenosyl-L-methionine = a ubiquinol + S-adenosyl-L-homocysteine + H(+). It carries out the reaction a 3-(all-trans-polyprenyl)benzene-1,2-diol + S-adenosyl-L-methionine = a 2-methoxy-6-(all-trans-polyprenyl)phenol + S-adenosyl-L-homocysteine + H(+). The protein operates within cofactor biosynthesis; ubiquinone biosynthesis. O-methyltransferase that catalyzes the 2 O-methylation steps in the ubiquinone biosynthetic pathway. This Cereibacter sphaeroides (strain ATCC 17023 / DSM 158 / JCM 6121 / CCUG 31486 / LMG 2827 / NBRC 12203 / NCIMB 8253 / ATH 2.4.1.) (Rhodobacter sphaeroides) protein is Ubiquinone biosynthesis O-methyltransferase.